The primary structure comprises 500 residues: Probable malate:quinone oxidoreductase (500 aa).

The protein belongs to the MQO family. FAD is required as a cofactor.

It carries out the reaction (S)-malate + a quinone = a quinol + oxaloacetate. Its pathway is carbohydrate metabolism; tricarboxylic acid cycle; oxaloacetate from (S)-malate (quinone route): step 1/1. In Bordetella avium (strain 197N), this protein is Probable malate:quinone oxidoreductase.